The sequence spans 876 residues: AP-5 complex subunit beta-1 (876 aa).

As to quaternary structure, probably part of the adaptor protein complex 5 (AP-5), a tetramer composed of AP5B1, AP5M1, AP5S1 and AP5Z1. Interacts with ZFYVE26 and SPG11.

Functionally, as part of AP-5, a probable fifth adaptor protein complex it may be involved in endosomal transport. The sequence is that of AP-5 complex subunit beta-1 (Ap5b1) from Mus musculus (Mouse).